Consider the following 261-residue polypeptide: Kallikrein-2 (261 aa).

A signal peptide spans 1–18 (MWDLVLSIALSVGCTGAV). A propeptide spans 19-24 (PLIQSR) (activation peptide). In terms of domain architecture, Peptidase S1 spans 25-258 (IVGGWECEKH…YRKWIKDTIA (234 aa)). Disulfide bonds link Cys-31-Cys-173, Cys-50-Cys-66, Cys-152-Cys-219, Cys-184-Cys-198, and Cys-209-Cys-234. Catalysis depends on His-65, which acts as the Charge relay system. N-linked (GlcNAc...) asparagine glycosylation occurs at Asn-102. The Charge relay system role is filled by Asp-120. Catalysis depends on Ser-213, which acts as the Charge relay system.

This sequence belongs to the peptidase S1 family. Kallikrein subfamily.

It carries out the reaction Preferential cleavage of Arg-|-Xaa bonds in small molecule substrates. Highly selective action to release kallidin (lysyl-bradykinin) from kininogen involves hydrolysis of Met-|-Xaa or Leu-|-Xaa.. Functionally, glandular kallikreins cleave Met-Lys and Arg-Ser bonds in kininogen to release Lys-bradykinin. This chain is Kallikrein-2 (KLK2), found in Homo sapiens (Human).